The chain runs to 216 residues: Peptide methionine sulfoxide reductase MsrA (216 aa).

Residue Cys-58 is part of the active site.

Belongs to the MsrA Met sulfoxide reductase family.

It catalyses the reaction L-methionyl-[protein] + [thioredoxin]-disulfide + H2O = L-methionyl-(S)-S-oxide-[protein] + [thioredoxin]-dithiol. The enzyme catalyses [thioredoxin]-disulfide + L-methionine + H2O = L-methionine (S)-S-oxide + [thioredoxin]-dithiol. Functionally, has an important function as a repair enzyme for proteins that have been inactivated by oxidation. Catalyzes the reversible oxidation-reduction of methionine sulfoxide in proteins to methionine. The sequence is that of Peptide methionine sulfoxide reductase MsrA from Azotobacter vinelandii (strain DJ / ATCC BAA-1303).